A 261-amino-acid chain; its full sequence is MPYTSAFLEVIPAIDLLQGRAVRLYQGDYAQAEQVADDPIQQAEAWAAQGAPRLHVVDLDGAKSGDPVNLPIIERIVRSLAIPVQVGGGIRSLERARQLLDLGVDRVIVGTLAVEDPDTLEAMTQAFPGRVWVGIDARQGQVATRGWLSTTPLRAPELVQRVQAQGAAGIIYTDISRDGTLAGPNLEQLRQILAVSQVPVIASGGIGSLTDLLALLSLPRLTGAILGKALYSGAISLQEALRAVGPGRWQDLPPETGSLWA.

D15 (proton acceptor) is an active-site residue. D136 serves as the catalytic Proton donor.

The protein belongs to the HisA/HisF family.

It is found in the cytoplasm. It carries out the reaction 1-(5-phospho-beta-D-ribosyl)-5-[(5-phospho-beta-D-ribosylamino)methylideneamino]imidazole-4-carboxamide = 5-[(5-phospho-1-deoxy-D-ribulos-1-ylimino)methylamino]-1-(5-phospho-beta-D-ribosyl)imidazole-4-carboxamide. It participates in amino-acid biosynthesis; L-histidine biosynthesis; L-histidine from 5-phospho-alpha-D-ribose 1-diphosphate: step 4/9. The protein is 1-(5-phosphoribosyl)-5-[(5-phosphoribosylamino)methylideneamino] imidazole-4-carboxamide isomerase of Synechococcus sp. (strain JA-2-3B'a(2-13)) (Cyanobacteria bacterium Yellowstone B-Prime).